Here is a 209-residue protein sequence, read N- to C-terminus: Protein N-terminal glutamine amidohydrolase (209 aa).

Residues C30, H83, and D99 contribute to the active site.

The protein belongs to the NTAQ1 family. Monomer. Widely expressed.

It localises to the cytoplasm. Its subcellular location is the cytosol. The protein resides in the nucleus. The enzyme catalyses N-terminal L-glutaminyl-[protein] + H2O = N-terminal L-glutamyl-[protein] + NH4(+). Functionally, mediates the side-chain deamidation of N-terminal glutamine residues to glutamate, an important step in N-end rule pathway of protein degradation. Conversion of the resulting N-terminal glutamine to glutamate renders the protein susceptible to arginylation, polyubiquitination and degradation as specified by the N-end rule. Does not act on substrates with internal or C-terminal glutamine and does not act on non-glutamine residues in any position. Does not deaminate acetylated N-terminal glutamine. With the exception of proline, all tested second-position residues on substrate peptides do not greatly influence the activity. In contrast, a proline at position 2, virtually abolishes deamidation of N-terminal glutamine. The protein is Protein N-terminal glutamine amidohydrolase (Ntaq1) of Mus musculus (Mouse).